The primary structure comprises 370 residues: MQSYGNPDVTYEWWAGNSVVTSRSGRFIASHIGHTGLIAFAAGGSTLWELARYNPEIPMGHQSSLFLGHLAAFGVGFDEAGAWTGVGVAAVAIVHLVLSMVYGGGALLHAVYFEADVADSEVPRARKFKLEWNNPDNQTFILGHHLFFFGMACIAFVEWARIHGIYDPAIGSVRQVNYNLDLTMIWNRQFDFIGIDSLEDVMGGHAFLAFAELTGATIHMVAGSTQWENKRLGEWSKYKGAELLSAEAVLSWSLAGIGWMAIVAAFWAATNTTVYPIEWFGEPLKLQFSVAPYWIDTADSTGITAFFGHTTRAALVNVHYYFGFFFLQGHFWHALRALGFDFKKVSEAIGNTEGATVRVEGAGFNGRAPR.

6 consecutive transmembrane segments (helical) span residues 27 to 47 (FIASHIGHTGLIAFAAGGSTL), 88 to 108 (VAAVAIVHLVLSMVYGGGALL), 140 to 160 (FILGHHLFFFGMACIAFVEWA), 201 to 221 (VMGGHAFLAFAELTGATIHMV), 248 to 268 (AVLSWSLAGIGWMAIVAAFWA), and 315 to 335 (LVNVHYYFGFFFLQGHFWHAL).

This sequence belongs to the PsbB/PsbC family. IsiA/Pcb subfamily. In terms of assembly, the antenna complex consists of divinyl chlorophylls (a and b) and divinyl chlorophyll a/b binding proteins and binds more divinyl chlorophyll b than does the antenna complex from high-light-adapted Prochlorococcus. The cofactor is divinyl chlorophyll a. It depends on divinyl chlorophyll b as a cofactor.

The protein resides in the cellular thylakoid membrane. Functionally, the antenna complex functions as a light receptor, it captures and delivers excitation energy to photosystems II and I. The Prochlorales pcb genes are not related to higher plant LHCs. This is Divinyl chlorophyll a/b light-harvesting protein PcbD (pcbD) from Prochlorococcus marinus (strain NATL2A).